We begin with the raw amino-acid sequence, 256 residues long: Acetyl-coenzyme A carboxylase carboxyl transferase subunit alpha (256 aa).

Positions 1 to 236 constitute a CoA carboxyltransferase C-terminal domain; it reads MTDVARILKE…KSHLIDEITQ (236 aa).

The protein belongs to the AccA family. As to quaternary structure, acetyl-CoA carboxylase is a heterohexamer composed of biotin carboxyl carrier protein (AccB), biotin carboxylase (AccC) and two subunits each of ACCase subunit alpha (AccA) and ACCase subunit beta (AccD).

It is found in the cytoplasm. It catalyses the reaction N(6)-carboxybiotinyl-L-lysyl-[protein] + acetyl-CoA = N(6)-biotinyl-L-lysyl-[protein] + malonyl-CoA. It participates in lipid metabolism; malonyl-CoA biosynthesis; malonyl-CoA from acetyl-CoA: step 1/1. Its function is as follows. Component of the acetyl coenzyme A carboxylase (ACC) complex. First, biotin carboxylase catalyzes the carboxylation of biotin on its carrier protein (BCCP) and then the CO(2) group is transferred by the carboxyltransferase to acetyl-CoA to form malonyl-CoA. The polypeptide is Acetyl-coenzyme A carboxylase carboxyl transferase subunit alpha (Streptococcus equi subsp. equi (strain 4047)).